The chain runs to 444 residues: Serine/threonine-protein kinase 2 (444 aa).

Residues Asn87–Gln444 enclose the Protein kinase domain. ATP contacts are provided by residues Leu93–Ile101 and Lys118. The Proton acceptor role is filled by Asp307.

It belongs to the protein kinase superfamily. Ser/Thr protein kinase family. Poxviruses subfamily. In terms of processing, phosphorylated in vivo. Autophosphorylated in vitro.

It is found in the host endoplasmic reticulum. Its subcellular location is the host endoplasmic reticulum-Golgi intermediate compartment. It catalyses the reaction L-seryl-[protein] + ATP = O-phospho-L-seryl-[protein] + ADP + H(+). The catalysed reaction is L-threonyl-[protein] + ATP = O-phospho-L-threonyl-[protein] + ADP + H(+). Essential serine-protein kinase involved in the early stage of virion morphogenesis. This chain is Serine/threonine-protein kinase 2 (OPG054), found in Vertebrata (FPV).